The following is a 580-amino-acid chain: 2-succinyl-5-enolpyruvyl-6-hydroxy-3-cyclohexene-1-carboxylate synthase (580 aa).

This sequence belongs to the TPP enzyme family. MenD subfamily. Homodimer. Mg(2+) is required as a cofactor. Requires Mn(2+) as cofactor. Thiamine diphosphate serves as cofactor.

The catalysed reaction is isochorismate + 2-oxoglutarate + H(+) = 5-enolpyruvoyl-6-hydroxy-2-succinyl-cyclohex-3-ene-1-carboxylate + CO2. It functions in the pathway quinol/quinone metabolism; 1,4-dihydroxy-2-naphthoate biosynthesis; 1,4-dihydroxy-2-naphthoate from chorismate: step 2/7. The protein operates within quinol/quinone metabolism; menaquinone biosynthesis. Catalyzes the thiamine diphosphate-dependent decarboxylation of 2-oxoglutarate and the subsequent addition of the resulting succinic semialdehyde-thiamine pyrophosphate anion to isochorismate to yield 2-succinyl-5-enolpyruvyl-6-hydroxy-3-cyclohexene-1-carboxylate (SEPHCHC). In Listeria monocytogenes serotype 4b (strain F2365), this protein is 2-succinyl-5-enolpyruvyl-6-hydroxy-3-cyclohexene-1-carboxylate synthase.